The primary structure comprises 185 residues: Large ribosomal subunit protein uL5 (185 aa).

This sequence belongs to the universal ribosomal protein uL5 family. In terms of assembly, part of the 50S ribosomal subunit; part of the 5S rRNA/L5/L18/L25 subcomplex. Contacts the 5S rRNA and the P site tRNA. Forms a bridge to the 30S subunit in the 70S ribosome.

Functionally, this is one of the proteins that bind and probably mediate the attachment of the 5S RNA into the large ribosomal subunit, where it forms part of the central protuberance. In the 70S ribosome it contacts protein S13 of the 30S subunit (bridge B1b), connecting the 2 subunits; this bridge is implicated in subunit movement. Contacts the P site tRNA; the 5S rRNA and some of its associated proteins might help stabilize positioning of ribosome-bound tRNAs. The polypeptide is Large ribosomal subunit protein uL5 (Bradyrhizobium diazoefficiens (strain JCM 10833 / BCRC 13528 / IAM 13628 / NBRC 14792 / USDA 110)).